Consider the following 396-residue polypeptide: MALKKRSKHSKKFKLNLGPQHPATHGVLRLILEMDGEIVERADPHIGLLHRGTEKLIEYKTYLQAIPYFDRLDYVSPMCQEHAFALAIEHLLKCEVPLRAQYIRVMFSELTRILNHTLNIATQALDVGATTPLLWMFEEREKIMEFYERVSGSRLHANYFRPGGVSQDLPEGLIENIADFCEQFPCKIADLETLLTDNRIWKQRTVDIGIVSKQQAMDWGFSGVMLRGSGIAWDLRKSQPYDQYANLDFDVAIGKNGDCYDRYLIRIEEMYQSIKIIKQCIQKMPAGEIRTQDPSISPPKRSEIKKSMEALINHFKLYSEGYNVPAGEVYAAVEAPKGEFGVYLYSDGTNRPYRCRIKAPGFAHLQGLDFMARGHSLSDIITIIATLDIVFGEIDR.

This sequence belongs to the complex I 49 kDa subunit family. In terms of assembly, NDH-1 is composed of 14 different subunits. Subunits NuoB, C, D, E, F, and G constitute the peripheral sector of the complex.

It localises to the cell inner membrane. It carries out the reaction a quinone + NADH + 5 H(+)(in) = a quinol + NAD(+) + 4 H(+)(out). Its function is as follows. NDH-1 shuttles electrons from NADH, via FMN and iron-sulfur (Fe-S) centers, to quinones in the respiratory chain. The immediate electron acceptor for the enzyme in this species is believed to be ubiquinone. Couples the redox reaction to proton translocation (for every two electrons transferred, four hydrogen ions are translocated across the cytoplasmic membrane), and thus conserves the redox energy in a proton gradient. The polypeptide is NADH-quinone oxidoreductase subunit D (Orientia tsutsugamushi (strain Ikeda) (Rickettsia tsutsugamushi)).